The primary structure comprises 838 residues: Major vault protein (838 aa).

MVP repeat units lie at residues 13–52 (VHIL…VVPP), 53–114 (RFYC…FKLK), 118–170 (VNTG…HIIS), 171–223 (PNTA…ITLT), 224–278 (DTEA…IVLN), 280–328 (KEYC…NVVS), 329–380 (KDQA…IALD), and 381–433 (KNEG…CMSE).

The vault ribonucleoprotein particle is a huge (400 A x 670 A) cage structure of 12.9 MDa. It consists of a dimer of half-vaults, with each half-vault comprising 39 identical major vault protein (MVP) chains, PARP4 and one or more vault RNAs (vRNAs).

The protein localises to the cytoplasm. It localises to the nucleus. Required for normal vault structure. Vaults are multi-subunit structures that may act as scaffolds for proteins involved in signal transduction. Vaults may also play a role in nucleo-cytoplasmic transport. The sequence is that of Major vault protein from Trypanosoma cruzi (strain CL Brener).